A 101-amino-acid polypeptide reads, in one-letter code: Small ribosomal subunit protein bS18c (101 aa).

Basic residues predominate over residues 1 to 19 (MDKSKQLFRKSKRSFRRRL). The disordered stretch occupies residues 1–23 (MDKSKQLFRKSKRSFRRRLPPIG).

This sequence belongs to the bacterial ribosomal protein bS18 family. Part of the 30S ribosomal subunit.

The protein localises to the plastid. It is found in the chloroplast. This chain is Small ribosomal subunit protein bS18c, found in Acorus calamus (Sweet flag).